The sequence spans 1011 residues: Phosphoenolpyruvate carboxylase (1011 aa).

Catalysis depends on residues His207 and Lys658.

The protein belongs to the PEPCase type 1 family. Mg(2+) is required as a cofactor.

The catalysed reaction is oxaloacetate + phosphate = phosphoenolpyruvate + hydrogencarbonate. Functionally, forms oxaloacetate, a four-carbon dicarboxylic acid source for the tricarboxylic acid cycle. The sequence is that of Phosphoenolpyruvate carboxylase (ppc) from Thermosynechococcus vestitus (strain NIES-2133 / IAM M-273 / BP-1).